Consider the following 306-residue polypeptide: uncharacterized protein (306 aa).

The Proton acceptor role is filled by Asp204.

It belongs to the aminoglycoside phosphotransferase family.

This is an uncharacterized protein from Bacillus subtilis (strain 168).